The primary structure comprises 313 residues: Homoserine O-succinyltransferase (313 aa).

Catalysis depends on C142, which acts as the Acyl-thioester intermediate. Substrate is bound by residues K163 and S192. Residue H235 is the Proton acceptor of the active site. The active site involves E237. R249 lines the substrate pocket.

The protein belongs to the MetA family.

It localises to the cytoplasm. The enzyme catalyses L-homoserine + succinyl-CoA = O-succinyl-L-homoserine + CoA. Its pathway is amino-acid biosynthesis; L-methionine biosynthesis via de novo pathway; O-succinyl-L-homoserine from L-homoserine: step 1/1. Transfers a succinyl group from succinyl-CoA to L-homoserine, forming succinyl-L-homoserine. The protein is Homoserine O-succinyltransferase of Vibrio vulnificus (strain YJ016).